A 418-amino-acid polypeptide reads, in one-letter code: UDP-N-acetylglucosamine 1-carboxyvinyltransferase (418 aa).

A phosphoenolpyruvate-binding site is contributed by 22–23 (KN). R92 serves as a coordination point for UDP-N-acetyl-alpha-D-glucosamine. C116 functions as the Proton donor in the catalytic mechanism. A 2-(S-cysteinyl)pyruvic acid O-phosphothioketal modification is found at C116. Residues 121–125 (RPIDL), D305, and L327 each bind UDP-N-acetyl-alpha-D-glucosamine.

This sequence belongs to the EPSP synthase family. MurA subfamily.

It localises to the cytoplasm. It catalyses the reaction phosphoenolpyruvate + UDP-N-acetyl-alpha-D-glucosamine = UDP-N-acetyl-3-O-(1-carboxyvinyl)-alpha-D-glucosamine + phosphate. Its pathway is cell wall biogenesis; peptidoglycan biosynthesis. Its function is as follows. Cell wall formation. Adds enolpyruvyl to UDP-N-acetylglucosamine. The chain is UDP-N-acetylglucosamine 1-carboxyvinyltransferase from Campylobacter lari (strain RM2100 / D67 / ATCC BAA-1060).